Here is a 168-residue protein sequence, read N- to C-terminus: uncharacterized protein (168 aa).

The interval 1–52 (MVLGLASFPESLSSQSETATQPRRPSVKWDLGSDYRKGTEETTASGSNFRRE) is disordered. A compositionally biased stretch (polar residues) spans 10-23 (ESLSSQSETATQPR). Residues 31–40 (LGSDYRKGTE) are compositionally biased toward basic and acidic residues.

This is an uncharacterized protein from Mus musculus (Mouse).